The following is a 308-amino-acid chain: Ribosomal RNA small subunit methyltransferase H (308 aa).

S-adenosyl-L-methionine is bound by residues 38–40 (GGH), Asp-58, Phe-82, Asp-99, and Gln-106.

The protein belongs to the methyltransferase superfamily. RsmH family.

Its subcellular location is the cytoplasm. It catalyses the reaction cytidine(1402) in 16S rRNA + S-adenosyl-L-methionine = N(4)-methylcytidine(1402) in 16S rRNA + S-adenosyl-L-homocysteine + H(+). Functionally, specifically methylates the N4 position of cytidine in position 1402 (C1402) of 16S rRNA. The protein is Ribosomal RNA small subunit methyltransferase H of Acidovorax sp. (strain JS42).